We begin with the raw amino-acid sequence, 573 residues long: Proline--tRNA ligase (573 aa).

This sequence belongs to the class-II aminoacyl-tRNA synthetase family. ProS type 1 subfamily. As to quaternary structure, homodimer.

The protein resides in the cytoplasm. It catalyses the reaction tRNA(Pro) + L-proline + ATP = L-prolyl-tRNA(Pro) + AMP + diphosphate. In terms of biological role, catalyzes the attachment of proline to tRNA(Pro) in a two-step reaction: proline is first activated by ATP to form Pro-AMP and then transferred to the acceptor end of tRNA(Pro). As ProRS can inadvertently accommodate and process non-cognate amino acids such as alanine and cysteine, to avoid such errors it has two additional distinct editing activities against alanine. One activity is designated as 'pretransfer' editing and involves the tRNA(Pro)-independent hydrolysis of activated Ala-AMP. The other activity is designated 'posttransfer' editing and involves deacylation of mischarged Ala-tRNA(Pro). The misacylated Cys-tRNA(Pro) is not edited by ProRS. This is Proline--tRNA ligase from Cupriavidus taiwanensis (strain DSM 17343 / BCRC 17206 / CCUG 44338 / CIP 107171 / LMG 19424 / R1) (Ralstonia taiwanensis (strain LMG 19424)).